The sequence spans 400 residues: Nicotinate phosphoribosyltransferase (400 aa).

His220 bears the Phosphohistidine; by autocatalysis mark.

It belongs to the NAPRTase family. Post-translationally, transiently phosphorylated on a His residue during the reaction cycle. Phosphorylation strongly increases the affinity for substrates and increases the rate of nicotinate D-ribonucleotide production. Dephosphorylation regenerates the low-affinity form of the enzyme, leading to product release.

The enzyme catalyses nicotinate + 5-phospho-alpha-D-ribose 1-diphosphate + ATP + H2O = nicotinate beta-D-ribonucleotide + ADP + phosphate + diphosphate. The protein operates within cofactor biosynthesis; NAD(+) biosynthesis; nicotinate D-ribonucleotide from nicotinate: step 1/1. Its function is as follows. Catalyzes the synthesis of beta-nicotinate D-ribonucleotide from nicotinate and 5-phospho-D-ribose 1-phosphate at the expense of ATP. This is Nicotinate phosphoribosyltransferase from Escherichia coli O7:K1 (strain IAI39 / ExPEC).